A 184-amino-acid polypeptide reads, in one-letter code: Phosducin-like protein 3 (184 aa).

The interval 45 to 184 is thioredoxin fold; sequence HGELKEIDEQ…VKNNKFKEDD (140 aa).

It belongs to the phosducin family.

In Dictyostelium discoideum (Social amoeba), this protein is Phosducin-like protein 3 (phlp3).